The following is a 555-amino-acid chain: MDGIVPDIAVGTKRGSDELFSTCVSNGPFIMSSSASAANGNDSKKFKGDNRSAGVPSRVIHVRKLPSDVTEGEVISLGLPFGKVTNLLMLKGKNQAFIEMNTEEAANTMVNYYTSVAPVLRGQPIYIQFSNHKELKTDSSPNQARAQAALQAVNSVQSGNLALAASAAAVDAGMAMAGQSPVLRIIVENLFYPVTLDVLHQIFSKFGTVLKIITFTKNNQFQALLQYADPVSAQHAKLSLDGQNIYNACCTLRIDFSKLTSLNVKYNNDKSRDYTRPDLPSGDSQPSLDQTMAAAFGAPGIMSASPYAGAGFPPTFAIPQAAGLSVPNVHGALAPLAIPSAAAAAAASRIAIPGLAGAGNSVLLVSNLNPERVTPQSLFILFGVYGDVQRVKILFNKKENALVQMADGSQAQLAMSHLNGHKLHGKSVRITLSKHQSVQLPREGQEDQGLTKDYGSSPLHRFKKPGSKNFQNIFPPSATLHLSNIPPSVSEDDLKSLFSSNGGVVKGFKFFQKDRKMALIQMGSVEEAVQALIELHNHDLGENHHLRVSFSKSTI.

M1 is subject to N-acetylmethionine. A Phosphoserine modification is found at S16. 3 consecutive RRM domains span residues 58 to 142 (RVIH…SSPN), 183 to 259 (LRII…FSKL), and 361 to 412 (SVLL…SQAQ). A Glycyl lysine isopeptide (Lys-Gly) (interchain with G-Cter in SUMO2) cross-link involves residue K64. Phosphotyrosine is present on Y126. T137 carries the post-translational modification Phosphothreonine. Position 140 is a phosphoserine (S140). K217 is covalently cross-linked (Glycyl lysine isopeptide (Lys-Gly) (interchain with G-Cter in SUMO2)). The interval 435–457 (HQSVQLPREGQEDQGLTKDYGSS) is disordered. S457 carries the post-translational modification Phosphoserine. Residues 478-553 (ATLHLSNIPP…HHLRVSFSKS (76 aa)) form the RRM 4 domain.

In terms of assembly, monomer. Part of a ternary complex containing KHSRP, PTBP1, PTBP2 and HNRPH1. Interacts with SFPQ. Interacts with RAVER1. Interacts with IVNS1ABP (via BACK domain); the interaction is direct. In terms of tissue distribution, expressed in myoblast; expression gradually decreases during muscle cell differentiation (at protein level).

The protein localises to the nucleus. Plays a role in pre-mRNA splicing and in the regulation of alternative splicing events. Activates exon skipping of its own pre-mRNA during muscle cell differentiation. Binds to the polypyrimidine tract of introns. May promote RNA looping when bound to two separate polypyrimidine tracts in the same pre-mRNA. May promote the binding of U2 snRNP to pre-mRNA. Cooperates with RAVER1 to modulate switching between mutually exclusive exons during maturation of the TPM1 pre-mRNA. Represses the splicing of MAPT/Tau exon 10. Binds to polypyrimidine-rich controlling element (PCE) of CFTR and promotes exon skipping of CFTR exon 9, thereby antagonizing TIA1 and its role in exon inclusion of CFTR exon 9. Plays a role in the splicing of pyruvate kinase PKM by binding repressively to a polypyrimidine tract flanking PKM exon 9, inhibiting exon 9 inclusion and resulting in exon 10 inclusion and production of the PKM M2 isoform. The sequence is that of Polypyrimidine tract-binding protein 1 (Ptbp1) from Mus musculus (Mouse).